The chain runs to 313 residues: MASVVTITLNAAYDLVGRLNRIQLGEVNTVETLGLFPAGKGINVAKVLKDLGVNVAVGGFLGKDNSADFEQMFNQHGLEDKFHRVDGKTRINVKITETEADVTDLNFLGYQISPQVWQQFVTDSLAYCLNYDIVAVCGSLPRGVSPELFADWLNQLHQAGVKVVLDSSNAALTAGLKAKPWLVKPNHRELEAWVGHPLNSLEEIIAAAQQLKAEGIENVIISMGAKGSLWINNEGVLKAEPAQCENVVSTVGAGDSMVAGLIYGFEKGLSKTETLAFATAVSAFAVSQSNVGVSDLSLLDPILEKVQITMIEG.

ATP contacts are provided by residues 222–227 and 254–255; these read SMGAKG and GD. Residue Asp255 is the Proton acceptor of the active site.

This sequence belongs to the carbohydrate kinase PfkB family.

It carries out the reaction beta-D-fructose 1-phosphate + ATP = beta-D-fructose 1,6-bisphosphate + ADP + H(+). Its function is as follows. Catalyzes the ATP-dependent phosphorylation of fructose-l-phosphate to fructose-l,6-bisphosphate. The protein is 1-phosphofructokinase (fruK) of Haemophilus influenzae (strain ATCC 51907 / DSM 11121 / KW20 / Rd).